The chain runs to 478 residues: Proline--tRNA ligase (478 aa).

Belongs to the class-II aminoacyl-tRNA synthetase family. ProS type 3 subfamily. Homodimer.

The protein resides in the cytoplasm. It catalyses the reaction tRNA(Pro) + L-proline + ATP = L-prolyl-tRNA(Pro) + AMP + diphosphate. Functionally, catalyzes the attachment of proline to tRNA(Pro) in a two-step reaction: proline is first activated by ATP to form Pro-AMP and then transferred to the acceptor end of tRNA(Pro). The chain is Proline--tRNA ligase from Clostridium botulinum (strain Okra / Type B1).